The sequence spans 241 residues: Homeobox protein TGIF2LX (241 aa).

2 disordered regions span residues 1–56 (MEAA…PKGY) and 115–213 (RHGN…EYPD). Residues 21–39 (AKTQSPAQDTSTVSRNSAD) are compositionally biased toward polar residues. The homeobox; TALE-type DNA-binding region spans 48 to 111 (EHTKKPKGYL…INARRRILPD (64 aa)).

The protein belongs to the TALE/TGIF homeobox family.

The protein localises to the nucleus. May have a transcription role in testis. This Hylobates lar (Lar gibbon) protein is Homeobox protein TGIF2LX (TGIF2LX).